We begin with the raw amino-acid sequence, 265 residues long: Urease accessory protein UreH (265 aa).

It belongs to the UreD family. As to quaternary structure, ureH, UreF and UreG form a complex that acts as a GTP-hydrolysis-dependent molecular chaperone, activating the urease apoprotein by helping to assemble the nickel containing metallocenter of UreC. The UreE protein probably delivers the nickel.

It is found in the cytoplasm. Functionally, required for maturation of urease via the functional incorporation of the urease nickel metallocenter. The chain is Urease accessory protein UreH from Helicobacter pylori (strain P12).